The sequence spans 61 residues: Temporin-1Tb (61 aa).

The N-terminal stretch at 1-22 is a signal peptide; it reads MFTLKKSLLLLFFLGTINLSLC. A propeptide spanning residues 23–44 is cleaved from the precursor; that stretch reads EEERNAEEERRDEPDERDVQVE. Leucine amide is present on leucine 59.

The protein belongs to the frog skin active peptide (FSAP) family. Temporin subfamily. As to quaternary structure, homo-oligomerizes in membranes as homodimers, homotrimers, or even homotetramers. Oligomerizes in presence of LPS. In Gram-positive bacterial mimetic membranes, the aggregation is weakly pronounced, and penetration proceeds more rapidly and is deeper than in Gram-negative bacterial mimetic membranes where aggregation is high. Homo-oligomerization is prevented by temporin-L. In terms of tissue distribution, expressed by the skin glands.

Its subcellular location is the secreted. It localises to the target cell membrane. The protein resides in the target cell. It is found in the target cell cytoplasm. Its function is as follows. Amphipathic alpha-helical antimicrobial peptide with potent activity against Gram-positive bacteria, weak activity against Gram-negative bacteria, and moderate activity against fungi. Mainly acts by causing membrane permeabilization, but is unable to forme pore-like openings. Is also able to penetrate eukaryotic cells (keratinocytes), and kill intracellular S.aureus (both wild-type and MRSA) without injuring host cells. Shows inhibitory effect on biofilm formation of Gram-positive bacteria, but not of Gram-negative bacteria. Shows antiviral activity against herpes simplex virus 1 (HSV-1) by disrupting the viral envelope. Also displays anti-leishmania activity by damaging parasite membrane. Does not show hemolytic activity. Acts synergistically with temporin-L that improves temporin-1Tb activity by preventing its self-association in lipopolysaccharides (LPS). In vitro, promotes cell migration and wound healing. The protein is Temporin-1Tb of Rana temporaria (European common frog).